Consider the following 342-residue polypeptide: S-adenosylmethionine:tRNA ribosyltransferase-isomerase (342 aa).

It belongs to the QueA family. As to quaternary structure, monomer.

It localises to the cytoplasm. The enzyme catalyses 7-aminomethyl-7-carbaguanosine(34) in tRNA + S-adenosyl-L-methionine = epoxyqueuosine(34) in tRNA + adenine + L-methionine + 2 H(+). The protein operates within tRNA modification; tRNA-queuosine biosynthesis. Functionally, transfers and isomerizes the ribose moiety from AdoMet to the 7-aminomethyl group of 7-deazaguanine (preQ1-tRNA) to give epoxyqueuosine (oQ-tRNA). In Streptococcus pneumoniae serotype 19F (strain G54), this protein is S-adenosylmethionine:tRNA ribosyltransferase-isomerase.